The chain runs to 113 residues: UPF0102 protein Shal_4069 (113 aa).

The protein belongs to the UPF0102 family.

The sequence is that of UPF0102 protein Shal_4069 from Shewanella halifaxensis (strain HAW-EB4).